A 557-amino-acid polypeptide reads, in one-letter code: Ribonuclease J 2 (557 aa).

Residues His-76, His-78, His-144, and Glu-166 each contribute to the Zn(2+) site. 366 to 370 is a substrate binding site; it reads HASSH.

This sequence belongs to the metallo-beta-lactamase superfamily. RNA-metabolizing metallo-beta-lactamase-like family. Bacterial RNase J subfamily. Homodimer, may be a subunit of the RNA degradosome. The cofactor is Zn(2+).

It is found in the cytoplasm. Functionally, an RNase that has 5'-3' exonuclease and possibly endoonuclease activity. Involved in maturation of rRNA and in some organisms also mRNA maturation and/or decay. The protein is Ribonuclease J 2 of Staphylococcus epidermidis (strain ATCC 35984 / DSM 28319 / BCRC 17069 / CCUG 31568 / BM 3577 / RP62A).